The primary structure comprises 254 residues: NAD-dependent protein deacylase (254 aa).

The Deacetylase sirtuin-type domain occupies 1 to 250 (MERLEEARKR…LPPSPEDQAE (250 aa)). Residue 22-41 (GAGISKPSGIPTFRDAEGLW) coordinates NAD(+). Residues tyrosine 66 and arginine 69 each contribute to the substrate site. 104–107 (QNVD) is an NAD(+) binding site. Histidine 122 functions as the Proton acceptor in the catalytic mechanism. The Zn(2+) site is built by cysteine 130, cysteine 133, cysteine 149, and cysteine 152. NAD(+) contacts are provided by residues 189–191 (GTS), 215–217 (NPE), and alanine 233.

This sequence belongs to the sirtuin family. Class III subfamily. Requires Zn(2+) as cofactor.

It localises to the cytoplasm. The enzyme catalyses N(6)-acetyl-L-lysyl-[protein] + NAD(+) + H2O = 2''-O-acetyl-ADP-D-ribose + nicotinamide + L-lysyl-[protein]. It carries out the reaction N(6)-succinyl-L-lysyl-[protein] + NAD(+) + H2O = 2''-O-succinyl-ADP-D-ribose + nicotinamide + L-lysyl-[protein]. NAD-dependent lysine deacetylase and desuccinylase that specifically removes acetyl and succinyl groups on target proteins. Modulates the activities of several proteins which are inactive in their acylated form. The polypeptide is NAD-dependent protein deacylase (Thermus thermophilus (strain ATCC BAA-163 / DSM 7039 / HB27)).